We begin with the raw amino-acid sequence, 94 residues long: Small ribosomal subunit protein bS6 (94 aa).

The protein belongs to the bacterial ribosomal protein bS6 family.

Its function is as follows. Binds together with bS18 to 16S ribosomal RNA. This chain is Small ribosomal subunit protein bS6, found in Phytoplasma mali (strain AT).